Reading from the N-terminus, the 51-residue chain is Toxin CSTX-18 (51 aa).

Disulfide bonds link Cys9–Cys22, Cys14–Cys27, Cys21–Cys36, and Cys29–Cys34.

Post-translationally, contains 4 disulfide bonds. As to expression, expressed by the venom gland.

The protein resides in the secreted. In Cupiennius salei (American wandering spider), this protein is Toxin CSTX-18.